The chain runs to 35 residues: Photosystem II reaction center protein T (35 aa).

The chain crosses the membrane as a helical span at residues 3–23; it reads ALVYTFLLISTLGIIFFAIFF.

The protein belongs to the PsbT family. In terms of assembly, PSII is composed of 1 copy each of membrane proteins PsbA, PsbB, PsbC, PsbD, PsbE, PsbF, PsbH, PsbI, PsbJ, PsbK, PsbL, PsbM, PsbT, PsbY, PsbZ, Psb30/Ycf12, at least 3 peripheral proteins of the oxygen-evolving complex and a large number of cofactors. It forms dimeric complexes.

Its subcellular location is the plastid. The protein localises to the chloroplast thylakoid membrane. Functionally, found at the monomer-monomer interface of the photosystem II (PS II) dimer, plays a role in assembly and dimerization of PSII. PSII is a light-driven water plastoquinone oxidoreductase, using light energy to abstract electrons from H(2)O, generating a proton gradient subsequently used for ATP formation. The polypeptide is Photosystem II reaction center protein T (Aristolochia macrophylla (Dutchman's pipe vine)).